Consider the following 700-residue polypeptide: Constitutive coactivator of peroxisome proliferator-activated receptor gamma (700 aa).

The protein belongs to the constitutive coactivator of PPAR-gamma family. In terms of assembly, interacts with ESR1 and RXRA. Interacts with PPARG; in a ligand-independent manner.

It is found in the nucleus. Functions as a transactivator of PPARG and ESR1. Functions in adipogenesis through PPARG activation. The chain is Constitutive coactivator of peroxisome proliferator-activated receptor gamma (FAM120B) from Bos taurus (Bovine).